The following is a 623-amino-acid chain: (-)-limonene synthase TPS1, chloroplastic (623 aa).

Residues 1 to 60 constitute a chloroplast transit peptide; the sequence is MQCIAFHQFASSSSLPIWSSIDNRFTPKTSITSISKPKPKLKSKSNLKSRSRSSTCYPIQ. The tract at residues 29-52 is disordered; sequence TSITSISKPKPKLKSKSNLKSRSR. Positions 37 to 51 are enriched in basic residues; sequence PKPKLKSKSNLKSRS. (2E)-geranyl diphosphate contacts are provided by Arg-337, Asp-374, Asp-378, Arg-516, and Asp-519. Residues Asp-374 and Asp-378 each coordinate Mg(2+). The short motif at 374–378 is the DDXXD motif element; it reads DDMHD. 3 residues coordinate Mg(2+): Asp-519, Thr-523, and Glu-527.

Belongs to the terpene synthase family. Tpsb subfamily. The cofactor is Mg(2+). Mn(2+) is required as a cofactor. K(+) serves as cofactor. Trichome.

The protein resides in the plastid. It is found in the chloroplast. It carries out the reaction (2E)-geranyl diphosphate = (4S)-limonene + diphosphate. The catalysed reaction is (2E)-geranyl diphosphate = terpinolene + diphosphate. The enzyme catalyses (2E)-geranyl diphosphate = (1R,5R)-alpha-pinene + diphosphate. It catalyses the reaction (2E)-geranyl diphosphate = (1R,5R)-beta-pinene + diphosphate. It carries out the reaction (2E)-geranyl diphosphate = beta-myrcene + diphosphate. The catalysed reaction is (2E)-geranyl diphosphate = (4R)-limonene + diphosphate. It participates in secondary metabolite biosynthesis; terpenoid biosynthesis. It functions in the pathway terpene metabolism; (4S)-limonene biosynthesis; (4S)-limonene from geranyl diphosphate: step 1/1. Involved in monoterpene (C10) olefins biosynthesis, constituants of cannabinoids and terpenoids-rich resins. Catalyzes mainly the conversion of (2E)-geranyl diphosphate to (-)-limonene, and also produces minor products such as (+)-limonene, (+)-alpha-pinene, terpinolene, (+)-beta-pinene and beta-myrcene. The chain is (-)-limonene synthase TPS1, chloroplastic from Cannabis sativa (Hemp).